A 372-amino-acid polypeptide reads, in one-letter code: Glutamate 5-kinase (372 aa).

Lys-14 is a binding site for ATP. Substrate contacts are provided by Ser-54, Asp-141, and Asn-153. 173–174 (TD) is a binding site for ATP. The PUA domain occupies 280 to 358 (RGHVVIDAGA…GEIESVLGYM (79 aa)).

Belongs to the glutamate 5-kinase family.

The protein localises to the cytoplasm. It carries out the reaction L-glutamate + ATP = L-glutamyl 5-phosphate + ADP. It functions in the pathway amino-acid biosynthesis; L-proline biosynthesis; L-glutamate 5-semialdehyde from L-glutamate: step 1/2. In terms of biological role, catalyzes the transfer of a phosphate group to glutamate to form L-glutamate 5-phosphate. This chain is Glutamate 5-kinase, found in Burkholderia multivorans (strain ATCC 17616 / 249).